The primary structure comprises 497 residues: Serine/arginine-rich protein PSR (497 aa).

An N-terminal signal peptide occupies residues 1 to 19 (MYSRCIALVFVGLLASSLA). The Extracellular portion of the chain corresponds to 20–366 (ANCYGPAGKL…HHGLSSQKLG (347 aa)). 5 N-linked (GlcNAc...) asparagine glycosylation sites follow: Asn-92, Asn-193, Asn-202, Asn-261, and Asn-283. A helical membrane pass occupies residues 367 to 387 (LAIGLPIAGVFLIILIAAAII). Topologically, residues 388 to 497 (YYRKRRESEK…ESASRDSDSD (110 aa)) are cytoplasmic. Residues 424–450 (MGSKTMQAMLDMRDDDESEHDSDDGYG) are necessary for phosphorylation by PSRPK in vitro. A compositionally biased stretch (acidic residues) spans 436-447 (RDDDESEHDSDD). The disordered stretch occupies residues 436 to 497 (RDDDESEHDS…ESASRDSDSD (62 aa)). Residues 459–471 (GRSRSRSRSRSVS) are compositionally biased toward basic residues. The segment covering 476-497 (GSRDARSESDPGESASRDSDSD) has biased composition (basic and acidic residues).

Post-translationally, phosphorylated on serine residues in the RS domain by PSRPK.

It localises to the membrane. This Physarum polycephalum (Slime mold) protein is Serine/arginine-rich protein PSR.